The sequence spans 411 residues: Adenylosuccinate synthetase (411 aa).

Residues 11–17 and 39–41 contribute to the GTP site; these read GDEGKGK and GHT. The active-site Proton acceptor is D12. Positions 12 and 39 each coordinate Mg(2+). Residues 12–15, 37–40, T121, R135, Q215, T230, and R294 each bind IMP; these read DEGK and NAGH. Catalysis depends on H40, which acts as the Proton donor. Substrate is bound at residue 290–296; the sequence is TTTKRPR. GTP contacts are provided by residues R296, 322-324, and 400-402; these read KLD and STS.

Belongs to the adenylosuccinate synthetase family. Homodimer. Requires Mg(2+) as cofactor.

It is found in the cytoplasm. The enzyme catalyses IMP + L-aspartate + GTP = N(6)-(1,2-dicarboxyethyl)-AMP + GDP + phosphate + 2 H(+). It participates in purine metabolism; AMP biosynthesis via de novo pathway; AMP from IMP: step 1/2. Its function is as follows. Plays an important role in the de novo pathway of purine nucleotide biosynthesis. Catalyzes the first committed step in the biosynthesis of AMP from IMP. This Helicobacter acinonychis (strain Sheeba) protein is Adenylosuccinate synthetase.